The following is a 94-amino-acid chain: Large ribosomal subunit protein uL23 (94 aa).

It belongs to the universal ribosomal protein uL23 family. As to quaternary structure, part of the 50S ribosomal subunit. Contacts protein L29, and trigger factor when it is bound to the ribosome.

In terms of biological role, one of the early assembly proteins it binds 23S rRNA. One of the proteins that surrounds the polypeptide exit tunnel on the outside of the ribosome. Forms the main docking site for trigger factor binding to the ribosome. In Geobacter sp. (strain M21), this protein is Large ribosomal subunit protein uL23.